A 169-amino-acid chain; its full sequence is Tumor suppressor ARF (169 aa).

Positions 1–63 (MGRRFLVTVR…RRGPHRNPGP (63 aa)) are interaction with CDK5RAP3 and MDM2. The segment at 54 to 73 (RRGPHRNPGPGDDDGQRSRS) is disordered.

In terms of assembly, does not interact with cyclins, CDK1, CDK2, CDK4, CDK5 or CDK6. Interacts with COMMD1. Binds to BCL6, E2F1, HUWE1, MDM2, MYC, NPM1/B23, TOP1/TOPOI and UBE2I/UBC9. Interacts with TBRG1. Interacts with CDKN2AIP and E4F1. Interacts with CDK5RAP3 and MDM2; form a ternary complex involved in regulation of p53/TP53. Interacts with NOP53; the interaction is direct and promotes ARF nucleoplasmic relocalization and ubiquitin-mediated proteasomal degradation. Interacts with TTF1 (via the N-terminal region (NRD) and a C-terminal region); the interaction is direct and inhibits the nucleolar localization of TTF1. As to quaternary structure, interacts with C1QBP. Ubiquitinated in normal cells by TRIP12 via the ubiquitin fusion degradation (UFD) pathway, a process that mediates ubiquitination at the N-terminus, regardless of the absence of lysine residues. Ubiquitination leads to its proteasomal degradation. In cancer cells, however, TRIP12 is located in a different cell compartment, preventing ubiquitination and degradation.

The protein resides in the nucleus. It is found in the nucleolus. It localises to the nucleoplasm. The protein localises to the mitochondrion. Capable of inducing cell cycle arrest in G1 and G2 phases. Acts as a tumor suppressor. Binds to MDM2 and blocks its nucleocytoplasmic shuttling by sequestering it in the nucleolus. This inhibits the oncogenic action of MDM2 by blocking MDM2-induced degradation of p53 and enhancing p53-dependent transactivation and apoptosis. Also induces G2 arrest and apoptosis in a p53-independent manner by preventing the activation of cyclin B1/CDC2 complexes. Binds to BCL6 and down-regulates BCL6-induced transcriptional repression. Binds to E2F1 and MYC and blocks their transcriptional activator activity but has no effect on MYC transcriptional repression. Binds to TOP1/TOPOI and stimulates its activity. This complex binds to rRNA gene promoters and may play a role in rRNA transcription and/or maturation. Interacts with NPM1/B23 and promotes its polyubiquitination and degradation, thus inhibiting rRNA processing. Plays a role in inhibiting ribosome biogenesis, perhaps by binding to the nucleolar localization sequence of transcription termination factor TTF1, and thereby preventing nucleolar localization of TTF1. Interacts with COMMD1 and promotes its 'Lys63'-linked polyubiquitination. Interacts with UBE2I/UBC9 and enhances sumoylation of a number of its binding partners including MDM2 and E2F1. Binds to HUWE1 and represses its ubiquitin ligase activity. May play a role in controlling cell proliferation and apoptosis during mammary gland development. Its function is as follows. May be involved in regulation of autophagy and caspase-independent cell death; the short-lived mitochondrial isoform is stabilized by C1QBP. The polypeptide is Tumor suppressor ARF (Mus musculus (Mouse)).